A 169-amino-acid polypeptide reads, in one-letter code: Thaumatin-like pathogenesis-related protein 4 (169 aa).

A signal peptide spans 1-21; that stretch reads MATSSTVLFLLLAVFAASASA.

This sequence belongs to the thaumatin family.

In terms of biological role, associated with resistance against stem rust fungi. The sequence is that of Thaumatin-like pathogenesis-related protein 4 (RASTL-4) from Avena sativa (Oat).